A 308-amino-acid chain; its full sequence is Pycsar effector protein PaPycTIR (308 aa).

54-143 is a binding site for a nucleoside 3',5'-cyclic phosphate; it reads LITEDAEDSE…RQVTRQLVDR (90 aa). A TIR-like region spans residues 160–278; the sequence is VFIICSVEAL…DLKGLTTIGY (119 aa).

It localises to the cytoplasm. The enzyme catalyses NAD(+) + H2O = ADP-D-ribose + nicotinamide + H(+). In terms of biological role, pycsar (pyrimidine cyclase system for antiphage resistance) provides immunity against bacteriophage. The pyrimidine cyclase (PycC) synthesizes cyclic nucleotides in response to infection; these serve as specific second messenger signals. The signals activate the adjacent effector, leading to bacterial cell death and abortive phage infection. A clade A Pycsar system. Functionally, the effector gene of a two-gene Pycsar system. Expression of this and adjacent uridylate cyclase PaPycC (AC P0DV40) probably confers resistance to bacteriophage. The genes are probably only expressed in response to bacteriophage infection. Probably only responds to cUMP (produced by its cognate NTP cyclase), acts by depleting cellular NAD(+) levels. This Pseudomonas aeruginosa protein is Pycsar effector protein PaPycTIR.